We begin with the raw amino-acid sequence, 499 residues long: ATP synthase subunit alpha (499 aa).

G169–T176 provides a ligand contact to ATP.

It belongs to the ATPase alpha/beta chains family. As to quaternary structure, F-type ATPases have 2 components, CF(1) - the catalytic core - and CF(0) - the membrane proton channel. CF(1) has five subunits: alpha(3), beta(3), gamma(1), delta(1), epsilon(1). CF(0) has three main subunits: a(1), b(2) and c(9-12). The alpha and beta chains form an alternating ring which encloses part of the gamma chain. CF(1) is attached to CF(0) by a central stalk formed by the gamma and epsilon chains, while a peripheral stalk is formed by the delta and b chains.

It is found in the cell inner membrane. The catalysed reaction is ATP + H2O + 4 H(+)(in) = ADP + phosphate + 5 H(+)(out). In terms of biological role, produces ATP from ADP in the presence of a proton gradient across the membrane. The alpha chain is a regulatory subunit. This chain is ATP synthase subunit alpha, found in Brachyspira hyodysenteriae (strain ATCC 49526 / WA1).